Consider the following 516-residue polypeptide: Citrate synthase, glyoxysomal (516 aa).

The transit peptide at 1–43 (MPTDMELSPSNVARHRLAVLAAHLSAASLEPPVMASSLEAHCV) directs the protein to the glyoxysome. Catalysis depends on residues His329, His368, and Asp424.

The protein belongs to the citrate synthase family.

The protein resides in the glyoxysome. The enzyme catalyses oxaloacetate + acetyl-CoA + H2O = citrate + CoA + H(+). Its pathway is carbohydrate metabolism; glyoxylate cycle; isocitrate from oxaloacetate: step 1/2. The polypeptide is Citrate synthase, glyoxysomal (Cucurbita maxima (Pumpkin)).